Consider the following 512-residue polypeptide: 2,3-bisphosphoglycerate-independent phosphoglycerate mutase (512 aa).

2 residues coordinate Mn(2+): D12 and S62. S62 acts as the Phosphoserine intermediate in catalysis. Substrate contacts are provided by residues H123, 153 to 154 (RD), R185, R191, 260 to 263 (RPDR), and K333. Mn(2+) contacts are provided by D400, H404, D441, H442, and H460.

It belongs to the BPG-independent phosphoglycerate mutase family. In terms of assembly, monomer. The cofactor is Mn(2+).

The catalysed reaction is (2R)-2-phosphoglycerate = (2R)-3-phosphoglycerate. The protein operates within carbohydrate degradation; glycolysis; pyruvate from D-glyceraldehyde 3-phosphate: step 3/5. Functionally, catalyzes the interconversion of 2-phosphoglycerate and 3-phosphoglycerate. In Clostridium perfringens (strain SM101 / Type A), this protein is 2,3-bisphosphoglycerate-independent phosphoglycerate mutase.